The primary structure comprises 288 residues: Bifunctional protein FolD (288 aa).

Residues 171 to 173 (GRS), S196, and T237 each bind NADP(+).

It belongs to the tetrahydrofolate dehydrogenase/cyclohydrolase family. As to quaternary structure, homodimer.

The enzyme catalyses (6R)-5,10-methylene-5,6,7,8-tetrahydrofolate + NADP(+) = (6R)-5,10-methenyltetrahydrofolate + NADPH. It catalyses the reaction (6R)-5,10-methenyltetrahydrofolate + H2O = (6R)-10-formyltetrahydrofolate + H(+). It participates in one-carbon metabolism; tetrahydrofolate interconversion. Catalyzes the oxidation of 5,10-methylenetetrahydrofolate to 5,10-methenyltetrahydrofolate and then the hydrolysis of 5,10-methenyltetrahydrofolate to 10-formyltetrahydrofolate. This chain is Bifunctional protein FolD, found in Elusimicrobium minutum (strain Pei191).